The following is a 599-amino-acid chain: Microtubule-associated protein 70-2 (599 aa).

The tract at residues 1-30 (MADGGGGEEGSASALRGSARRRGAVQPAGL) is disordered. Residues 43-349 (DPVKVELNRL…ARSEAQLKEK (307 aa)) are a coiled coil. A required for targeting to microtubules region spans residues 227 to 460 (ILDRLHRQKV…HLLNRSTDAV (234 aa)). 2 disordered regions span residues 357–453 (LEDG…PHLL) and 557–599 (AMRL…RNLQ). The span at 404–420 (RRSPSFNSRSSLSTSSS) shows a compositional bias: low complexity. Residues 533–570 (LTKAMEVEAKKMRREVAAMEKEVAAMRLDKDQENKAKR) adopt a coiled-coil conformation. Over residues 557-568 (AMRLDKDQENKA) the composition is skewed to basic and acidic residues.

This sequence belongs to the MAP70 family.

The protein resides in the cytoplasm. It localises to the cytoskeleton. Its function is as follows. Plant-specific protein that interact with microtubules. This Oryza sativa subsp. japonica (Rice) protein is Microtubule-associated protein 70-2 (MAP70.2).